The following is a 72-amino-acid chain: Translation initiation factor IF-1 (72 aa).

The 72-residue stretch at 1-72 (MAKDDVIEVE…TRGRITYRYK (72 aa)) folds into the S1-like domain. Tyrosine 60 carries the phosphotyrosine modification.

This sequence belongs to the IF-1 family. In terms of assembly, component of the 30S ribosomal translation pre-initiation complex which assembles on the 30S ribosome in the order IF-2 and IF-3, IF-1 and N-formylmethionyl-tRNA(fMet); mRNA recruitment can occur at any time during PIC assembly.

It is found in the cytoplasm. In terms of biological role, one of the essential components for the initiation of protein synthesis. Stabilizes the binding of IF-2 and IF-3 on the 30S subunit to which N-formylmethionyl-tRNA(fMet) subsequently binds. Helps modulate mRNA selection, yielding the 30S pre-initiation complex (PIC). Upon addition of the 50S ribosomal subunit IF-1, IF-2 and IF-3 are released leaving the mature 70S translation initiation complex. The protein is Translation initiation factor IF-1 of Bacillus pumilus (strain SAFR-032).